The following is an 85-amino-acid chain: U4-theraphotoxin-Hhn1a (85 aa).

The signal sequence occupies residues 1 to 22 (MKVTLIVILTCAAVLVLHTTAA). Positions 23-48 (EELEAESQLMEVGMPDTELAAVDEER) are excised as a propeptide. Cystine bridges form between C52-C66, C56-C77, and C71-C82.

This sequence belongs to the neurotoxin 12 (Hwtx-2) family. 02 (Hwtx-2) subfamily. As to quaternary structure, monomer. As to expression, expressed by the venom gland.

It localises to the secreted. Neurotoxin active on both insects and mammals. The polypeptide is U4-theraphotoxin-Hhn1a (Cyriopagopus hainanus (Chinese bird spider)).